The sequence spans 64 residues: uncharacterized protein (64 aa).

This is an uncharacterized protein from Enterobacteria phage T4 (Bacteriophage T4).